The following is a 367-amino-acid chain: MKSRLQVRSAHVPLWSWIIPLFGCVIAAMTLAHVLPERSVVLLLMSAGLLTGAVFASVHHAEILAARVGQPSGAILLAVCVTIIEVAIIGSLMLSGAEGNEEVARDTVFAAVMIVLNGVIGLCLVLGGRRHREQSFQLNAASAALAVLGTLATLSLVLPNFVTAGKPQQFAAIQLVVIGLVSVVLYGVFLFVQTVRHRDYFIDDEDAASPPATHETPRNPLAAGALLVLALIAVILLAMLLSYPLDSAVEALGLPQAVVGVTIAGVVLLPEGITSVKAALMNRLQNSINLVLGSALASIGVTIPVVAAISVALGRDLALGLAPQNLIMLILTLFVGTITLGTGRTTVLQGAVHLAIFTVFLLLSAIP.

The next 11 membrane-spanning stretches (helical) occupy residues 12-32 (VPLW…MTLA), 39-59 (SVVL…ASVH), 74-94 (AILL…SLML), 108-128 (VFAA…VLGG), 143-163 (AALA…NFVT), 172-192 (AIQL…FLFV), 221-241 (LAAG…AMLL), 249-269 (VEAL…VVLL), 291-311 (VLGS…AISV), 318-338 (ALGL…VGTI), and 347-367 (VLQG…SAIP).

The protein belongs to the Ca(2+):cation antiporter (CaCA) (TC 2.A.19) family.

Its subcellular location is the cell membrane. Functionally, possible cation transporter. This is Putative ionic transporter y4hA from Sinorhizobium fredii (strain NBRC 101917 / NGR234).